Here is a 1091-residue protein sequence, read N- to C-terminus: TATA element modulatory factor (1091 aa).

Disordered regions lie at residues 42-86 (IPYG…KPVR) and 100-280 (FLSP…DAKS). Polar residues predominate over residues 57-81 (WDTSTWGLNSTSSEPQSPPTASQAI). Phosphoserine is present on residues Ser73, Ser78, Ser112, and Ser136. Low complexity-rich tracts occupy residues 111 to 122 (KSPVVSKPPSKS), 131 to 142 (SSLQESSSPGQS), and 194 to 211 (SENV…TTST). Phosphoserine is present on Ser213. The segment covering 217-234 (ETKDMALEPKEQKHEDRQ) has biased composition (basic and acidic residues). Composition is skewed to low complexity over residues 242 to 253 (VSSFSSGTSTTS) and 264 to 273 (ISESSASSRQ). 6 positions are modified to phosphoserine: Ser324, Ser326, Ser329, Ser334, Ser340, and Ser357. An interaction with Elongin BC complex region spans residues 329–338 (SLDSRSVSEI). Residues 360–443 (TPKTKVVEST…NQPKAPPEKE (84 aa)) form a disordered region. Residues 368–379 (STEENAEEEEGN) show a composition bias toward acidic residues. Phosphoserine is present on residues Ser411 and Ser540. 2 coiled-coil regions span residues 443–767 (EDVC…STAR) and 824–894 (IQMS…SQLE). A phosphoserine mark is found at Ser923 and Ser926. The residue at position 927 (Thr927) is a Phosphothreonine. Position 931 is a phosphoserine (Ser931). Positions 984–1090 (IENLQSQLKL…QIDELLRQRL (107 aa)) form a coiled coil.

As to quaternary structure, component of the SNF/SWI transcription factor complexes. Interacts with RAB6A. Interacts with TCEB1. Interacts with STAT3 and FER. Interacts with TRNP1; may regulate TRNP1 proteasomal degradation. Post-translationally, phosphorylated by FER.

It localises to the cytoplasm. It is found in the nucleus. Its subcellular location is the golgi apparatus membrane. In terms of biological role, potential coactivator of the androgen receptor. May play critical roles in two RAB6-dependent retrograde transport processes: one from endosomes to the Golgi and the other from the Golgi to the ER. Mediates STAT3 degradation. The chain is TATA element modulatory factor (Tmf1) from Mus musculus (Mouse).